We begin with the raw amino-acid sequence, 598 residues long: Elongation factor 4 (598 aa).

Residues 3–185 (QHIRNFSIIA…MIVAQIPPPE (183 aa)) form the tr-type G domain. GTP contacts are provided by residues 15–20 (DHGKST) and 132–135 (NKID).

This sequence belongs to the TRAFAC class translation factor GTPase superfamily. Classic translation factor GTPase family. LepA subfamily.

It is found in the cell inner membrane. The enzyme catalyses GTP + H2O = GDP + phosphate + H(+). Functionally, required for accurate and efficient protein synthesis under certain stress conditions. May act as a fidelity factor of the translation reaction, by catalyzing a one-codon backward translocation of tRNAs on improperly translocated ribosomes. Back-translocation proceeds from a post-translocation (POST) complex to a pre-translocation (PRE) complex, thus giving elongation factor G a second chance to translocate the tRNAs correctly. Binds to ribosomes in a GTP-dependent manner. This chain is Elongation factor 4, found in Nitrosomonas europaea (strain ATCC 19718 / CIP 103999 / KCTC 2705 / NBRC 14298).